The chain runs to 1464 residues: Sister chromatid cohesion protein PDS5 homolog B-B (1464 aa).

The HEAT repeat unit spans residues leucine 383–tyrosine 419. The disordered stretch occupies residues lysine 1126–leucine 1464. Residues proline 1137–valine 1155 are compositionally biased toward polar residues. Low complexity predominate over residues serine 1156–glycine 1168. A compositionally biased stretch (acidic residues) spans threonine 1177–aspartate 1186. Composition is skewed to basic and acidic residues over residues lysine 1197 to proline 1215, glutamate 1234 to serine 1244, and tryptophan 1265 to leucine 1274. Over residues lysine 1286–lysine 1295 the composition is skewed to basic residues. Positions lysine 1287–methionine 1299 form a DNA-binding region, a.T hook 1. Positions proline 1325–asparagine 1342 are enriched in acidic residues. Over residues arginine 1347–proline 1357 the composition is skewed to basic residues. Residues lysine 1359–threonine 1373 show a composition bias toward polar residues. 2 DNA-binding regions (a.T hook) span residues glutamine 1375 to valine 1387 and lysine 1391 to lysine 1403. Residues lysine 1390–valine 1400 show a composition bias toward basic residues. Over residues serine 1425–valine 1435 the composition is skewed to acidic residues. Basic residues predominate over residues glycine 1441 to glutamine 1453. A compositionally biased stretch (basic and acidic residues) spans methionine 1455–leucine 1464.

This sequence belongs to the PDS5 family. As to quaternary structure, interacts with the cohesin complex. Post-translationally, phosphorylated in mitotic cells.

It is found in the nucleus. In terms of biological role, plays a role in androgen-induced proliferative arrest. Required for maintenance of sister chromatid cohesion during mitosis. The protein is Sister chromatid cohesion protein PDS5 homolog B-B (pds5b-b) of Xenopus laevis (African clawed frog).